A 77-amino-acid polypeptide reads, in one-letter code: Large ribosomal subunit protein bL28 (77 aa).

The segment at 1-25 (MARVCQVTGKAPMSGNNVSHANNKT) is disordered.

It belongs to the bacterial ribosomal protein bL28 family.

The polypeptide is Large ribosomal subunit protein bL28 (Paraburkholderia phytofirmans (strain DSM 17436 / LMG 22146 / PsJN) (Burkholderia phytofirmans)).